A 1691-amino-acid polypeptide reads, in one-letter code: Collagen alpha-6(IV) chain (1691 aa).

The first 22 residues, 1-22, serve as a signal peptide directing secretion; it reads MLINKLWLLLVTLCLTEELAAA. Residues 23 to 46 form a 7S domain region; sequence GEKSYGKPCGGQDCSGSCQCFPEK. Residues 47-1463 form a triple-helical region region; it reads GARGRPGPIG…FGMPGMPGQS (1417 aa). Disordered stretches follow at residues 108–338, 404–473, 486–881, 915–1099, and 1185–1459; these read IPGH…EGQK, GFPG…LGLK, GGVP…KGSP, GIPG…KGRD, and THGT…MPGM. The N-linked (GlcNAc...) asparagine glycan is linked to Asn-127. Low complexity predominate over residues 185 to 197; sequence PQGAPGFPGAVGP. A compositionally biased stretch (pro residues) spans 198 to 213; it reads AGPPGLQGPPGPPGPL. Composition is skewed to low complexity over residues 311–320 and 421–431; these read QGPPGQQGKK and GAAGLPGRDGL. Composition is skewed to pro residues over residues 432–443 and 491–502; these read PGPPGPPGPPSP and TGPPGEPGPPGP. Over residues 503–512 the composition is skewed to low complexity; that stretch reads WGLIGLPGLK. A Cell attachment site motif is present at residues 515–517; it reads RGD. The span at 526-541 shows a compositional bias: low complexity; it reads PAGAPGLVGPLGPSGP. The Cell attachment site motif lies at 560 to 562; sequence RGD. Residues 588–599 show a composition bias toward gly residues; sequence GLPGDGGQGFPG. 4 stretches are compositionally biased toward low complexity: residues 641-652, 660-703, 722-735, and 802-820; these read LPGQQGLPGSKG, PGSY…GSPG, LPGF…DGLP, and SPGT…SSGP. Over residues 842-851 the composition is skewed to basic residues; sequence PGKKGTRGKK. Residues 853–878 are compositionally biased toward low complexity; it reads PPGSIVKKGLPGLKGLPGNPGLVGLK. The short motif at 986 to 988 is the Cell attachment site element; the sequence is RGD. Residues 1055–1068 are compositionally biased toward low complexity; it reads SPGLPGASGLPGLK. Positions 1210-1220 are enriched in gly residues; the sequence is GYPGIGIGAPG. Residues 1234–1253 are compositionally biased toward low complexity; the sequence is PGLQGPAGLPGAPGISLPSL. Over residues 1275–1284 the composition is skewed to pro residues; it reads PAGPPGPPGP. A compositionally biased stretch (polar residues) spans 1360-1371; it reads SGLQGDPGQTPT. Composition is skewed to low complexity over residues 1384-1397 and 1429-1459; these read LPGI…TGDP and ALGD…MPGM. Positions 1467–1691 constitute a Collagen IV NC1 domain; sequence GYTLVKHSQS…SRCQVCMKSL (225 aa). Cystine bridges form between Cys-1482–Cys-1571, Cys-1515–Cys-1568, Cys-1527–Cys-1533, Cys-1590–Cys-1687, Cys-1624–Cys-1684, and Cys-1636–Cys-1643.

Belongs to the type IV collagen family. As to quaternary structure, there are six type IV collagen isoforms, alpha 1(IV)-alpha 6(IV), each of which can form a triple helix structure with 2 other chains to generate type IV collagen network. Post-translationally, prolines at the third position of the tripeptide repeating unit (G-X-Y) are hydroxylated in some or all of the chains. Type IV collagens contain numerous cysteine residues which are involved in inter- and intramolecular disulfide bonding. 12 of these, located in the NC1 domain, are conserved in all known type IV collagens. In terms of processing, the trimeric structure of the NC1 domains is stabilized by covalent bonds between Lys and Met residues.

It is found in the secreted. The protein resides in the extracellular space. The protein localises to the extracellular matrix. It localises to the basement membrane. In terms of biological role, type IV collagen is the major structural component of glomerular basement membranes (GBM), forming a 'chicken-wire' meshwork together with laminins, proteoglycans and entactin/nidogen. This is Collagen alpha-6(IV) chain (COL4A6) from Homo sapiens (Human).